The sequence spans 174 residues: Large ribosomal subunit protein uL10 (174 aa).

This sequence belongs to the universal ribosomal protein uL10 family. Part of the ribosomal stalk of the 50S ribosomal subunit. The N-terminus interacts with L11 and the large rRNA to form the base of the stalk. The C-terminus forms an elongated spine to which L12 dimers bind in a sequential fashion forming a multimeric L10(L12)X complex.

Functionally, forms part of the ribosomal stalk, playing a central role in the interaction of the ribosome with GTP-bound translation factors. This chain is Large ribosomal subunit protein uL10, found in Syntrophus aciditrophicus (strain SB).